The sequence spans 375 residues: Succinyl-diaminopimelate desuccinylase (375 aa).

Histidine 66 is a Zn(2+) binding site. Aspartate 68 is a catalytic residue. Zn(2+) is bound at residue aspartate 99. Residue glutamate 133 is the Proton acceptor of the active site. 3 residues coordinate Zn(2+): glutamate 134, glutamate 162, and histidine 348.

It belongs to the peptidase M20A family. DapE subfamily. As to quaternary structure, homodimer. Zn(2+) serves as cofactor. The cofactor is Co(2+).

The enzyme catalyses N-succinyl-(2S,6S)-2,6-diaminopimelate + H2O = (2S,6S)-2,6-diaminopimelate + succinate. The protein operates within amino-acid biosynthesis; L-lysine biosynthesis via DAP pathway; LL-2,6-diaminopimelate from (S)-tetrahydrodipicolinate (succinylase route): step 3/3. Its function is as follows. Catalyzes the hydrolysis of N-succinyl-L,L-diaminopimelic acid (SDAP), forming succinate and LL-2,6-diaminopimelate (DAP), an intermediate involved in the bacterial biosynthesis of lysine and meso-diaminopimelic acid, an essential component of bacterial cell walls. The protein is Succinyl-diaminopimelate desuccinylase of Escherichia coli O6:K15:H31 (strain 536 / UPEC).